Here is a 475-residue protein sequence, read N- to C-terminus: Erythroid membrane-associated protein (475 aa).

Residues 1–29 (MEMASSAGSWLSGCLIPLVFLRLSVHVSG) form the signal peptide. Positions 30-140 (HAGDAGKFHV…GNLSKEDTVI (111 aa)) constitute an Ig-like V-type domain. Over 30-155 (HAGDAGKFHV…PSVGSLSPSA (126 aa)) the chain is Extracellular. C50 and C126 are oxidised to a cystine. Residue N132 is glycosylated (N-linked (GlcNAc...) asparagine). The helical transmembrane segment at 156-176 (VALAVILPVLVLLIMVCLCLI) threads the bilayer. The Cytoplasmic segment spans residues 177-475 (WKQRRAKEKL…ALQELKAPSF (299 aa)). The region spanning 220–418 (KLKRAAANSG…LVICSELHKS (199 aa)) is the B30.2/SPRY domain. Residue S418 is modified to Phosphoserine.

The protein belongs to the immunoglobulin superfamily. BTN/MOG family. In terms of processing, glycosylated. Expressed in erythroid-enriched bone marrow (at protein level). Highly expressed in bone marrow and to a lower extent in leukocytes, thymus, lymph node and spleen.

The protein resides in the cell membrane. The protein localises to the cytoplasm. Functionally, possible role as a cell-adhesion or receptor molecule of erythroid cells. In Homo sapiens (Human), this protein is Erythroid membrane-associated protein (ERMAP).